The following is a 157-amino-acid chain: Endoribonuclease YbeY (157 aa).

Residues His113, His117, and His123 each contribute to the Zn(2+) site.

Belongs to the endoribonuclease YbeY family. The cofactor is Zn(2+).

The protein resides in the cytoplasm. Functionally, single strand-specific metallo-endoribonuclease involved in late-stage 70S ribosome quality control and in maturation of the 3' terminus of the 16S rRNA. This chain is Endoribonuclease YbeY, found in Ehrlichia ruminantium (strain Welgevonden).